Here is a 505-residue protein sequence, read N- to C-terminus: Maturase K (505 aa).

It belongs to the intron maturase 2 family. MatK subfamily.

The protein localises to the plastid. It is found in the chloroplast. Its function is as follows. Usually encoded in the trnK tRNA gene intron. Probably assists in splicing its own and other chloroplast group II introns. In Allamanda cathartica (Yellow allamanda), this protein is Maturase K.